We begin with the raw amino-acid sequence, 113 residues long: Phosphoribosyl-ATP pyrophosphatase (113 aa).

This sequence belongs to the PRA-PH family.

The protein resides in the cytoplasm. The catalysed reaction is 1-(5-phospho-beta-D-ribosyl)-ATP + H2O = 1-(5-phospho-beta-D-ribosyl)-5'-AMP + diphosphate + H(+). It functions in the pathway amino-acid biosynthesis; L-histidine biosynthesis; L-histidine from 5-phospho-alpha-D-ribose 1-diphosphate: step 2/9. This is Phosphoribosyl-ATP pyrophosphatase from Janthinobacterium sp. (strain Marseille) (Minibacterium massiliensis).